The primary structure comprises 711 residues: Toxin RTX-III translocation ATP-binding protein (711 aa).

The Peptidase C39 domain maps to 1–129 (MESQMPFNEK…EIFQGGMILI (129 aa)). Histidine 87 is a catalytic residue. Positions 158–440 (FVETIIVSIF…LAQLWQDFQQ (283 aa)) constitute an ABC transmembrane type-1 domain. Helical transmembrane passes span 162 to 182 (IIVSIFLQLFALITPLFFQVV), 195 to 215 (LNVITVALSVVVIFEIVLSGL), 273 to 293 (ALTSVLDLLFSFIFFAVMWYY), 299 to 319 (IVILLSLPCYIAWSIFISPIL), and 392 to 412 (VMIINLWLGAHLVISGDLSIG). The 236-residue stretch at 472-707 (IAFKHIRFRY…ENGLYYYLNQ (236 aa)) folds into the ABC transporter domain. Residue 506–513 (GRSGSGKS) participates in ATP binding.

This sequence belongs to the ABC transporter superfamily. Protein-1 exporter (TC 3.A.1.109) family. As to quaternary structure, homodimer.

The protein resides in the cell membrane. Involved in the transport of the toxin RTX-III. In Actinobacillus pleuropneumoniae (Haemophilus pleuropneumoniae), this protein is Toxin RTX-III translocation ATP-binding protein (apxIIIB).